A 529-amino-acid polypeptide reads, in one-letter code: GTPase Obg (529 aa).

Residues A2 to I159 enclose the Obg domain. Residues A160 to K343 enclose the OBG-type G domain. Residues G166–S173, F191–I195, D212–G215, N295–D298, and S324–T326 contribute to the GTP site. Mg(2+) contacts are provided by S173 and T193. The OCT domain occupies P363–P447. The segment at G461–S529 is disordered. The span at T462–A502 shows a compositional bias: basic and acidic residues.

The protein belongs to the TRAFAC class OBG-HflX-like GTPase superfamily. OBG GTPase family. As to quaternary structure, monomer. Mg(2+) is required as a cofactor.

The protein resides in the cytoplasm. In terms of biological role, an essential GTPase which binds GTP, GDP and possibly (p)ppGpp with moderate affinity, with high nucleotide exchange rates and a fairly low GTP hydrolysis rate. Plays a role in control of the cell cycle, stress response, ribosome biogenesis and in those bacteria that undergo differentiation, in morphogenesis control. The chain is GTPase Obg from Pseudarthrobacter chlorophenolicus (strain ATCC 700700 / DSM 12829 / CIP 107037 / JCM 12360 / KCTC 9906 / NCIMB 13794 / A6) (Arthrobacter chlorophenolicus).